The chain runs to 384 residues: Methyl-CpG-binding domain-containing protein 10 (384 aa).

The region spanning threonine 4–threonine 74 is the MBD domain. The segment at serine 65–cysteine 384 is disordered. Residues arginine 80–threonine 91 are compositionally biased toward polar residues. The stretch at lysine 100 to lysine 224 forms a coiled coil. Basic and acidic residues-rich tracts occupy residues threonine 106–glycine 227, glutamate 234–glutamine 250, and aspartate 257–asparagine 269. Polar residues predominate over residues lysine 270–threonine 284. Residues glutamate 295–arginine 365 are compositionally biased toward basic and acidic residues. Residues threonine 310 to asparagine 356 adopt a coiled-coil conformation. Serine 323 bears the Phosphoserine mark. Over residues alanine 369–cysteine 384 the composition is skewed to low complexity.

Expressed in leaves, buds, flowers, stems and siliques.

It localises to the nucleus. In terms of biological role, probable transcriptional regulator. Required for nucleolar dominance that consist in the silencing of rRNA genes inherited from one progenitor in genetic hybrids. The sequence is that of Methyl-CpG-binding domain-containing protein 10 (MBD10) from Arabidopsis thaliana (Mouse-ear cress).